Here is a 144-residue protein sequence, read N- to C-terminus: MDKIDIYSDGACKGNPGRGGWGALLVMGEREKEIFGGELDTTNNRMELKAVIEALNLLTRPCEVVVHTDSQYVQKGISEWIHGWKARGWKTAAKAPVKNVDLWQALDAAQARHKIEWRWVRGHNGHAGNERADALANRGVEVAA.

Residues 1–141 (MDKIDIYSDG…ADALANRGVE (141 aa)) enclose the RNase H type-1 domain. Residues Asp-9, Glu-47, Asp-69, and Asp-133 each coordinate Mg(2+).

It belongs to the RNase H family. In terms of assembly, monomer. Mg(2+) serves as cofactor.

It localises to the cytoplasm. It catalyses the reaction Endonucleolytic cleavage to 5'-phosphomonoester.. Endonuclease that specifically degrades the RNA of RNA-DNA hybrids. The polypeptide is Ribonuclease H (Janthinobacterium sp. (strain Marseille) (Minibacterium massiliensis)).